The chain runs to 446 residues: Radical S-adenosyl methionine domain-containing protein 1, mitochondrial (446 aa).

One can recognise a Radical SAM core domain in the interval 15–277 (KGYNKLKDLP…VCEAEAMGFQ (263 aa)). Cysteine 34, cysteine 38, and cysteine 41 together coordinate [4Fe-4S] cluster. S-adenosyl-L-methionine contacts are provided by residues glycine 94, 95 to 96 (GT), glutamate 130, glutamine 159, arginine 171, and aspartate 195.

This sequence belongs to the anaerobic coproporphyrinogen-III oxidase family. HemW subfamily.

The protein resides in the mitochondrion. Functionally, may be a heme chaperone, appears to bind heme. Homologous bacterial proteins do not have oxygen-independent coproporphyrinogen-III oxidase activity. Binds 1 [4Fe-4S] cluster. The cluster is coordinated with 3 cysteines and an exchangeable S-adenosyl-L-methionine. This chain is Radical S-adenosyl methionine domain-containing protein 1, mitochondrial (rsad1), found in Dictyostelium discoideum (Social amoeba).